A 316-amino-acid polypeptide reads, in one-letter code: MITEIFPFSVLILALLIDIVLGEPPAALHPVVIIGTAVDRLRRMMPRRKISGMIISVLVISGAVLAGFALIRIAYATGSLAGSSEMGDILALIISSYLLKSTFAFKSLIMTSREIGNLIDEDLDAAKHLLPALVSRNPLNLTHAQARSAVIESLSENYVDTIVSPLFYYVLFSCAGLGVEAALAFKAVSTMDSMLGYKSDDLREIGYVPARLDDILNWIPARLSLPLIMIASPRKSMDILKACMRYHSVTPSPNSGWPMAAAAGALGTRMAKPGVYTILDEGRDPESEDVSSAISLIGRAMVLAALLSALLLILLR.

5 helical membrane-spanning segments follow: residues methionine 1–leucine 21, isoleucine 50–leucine 70, isoleucine 89–isoleucine 109, proline 165–phenylalanine 185, and isoleucine 294–leucine 314.

It belongs to the CobD/CbiB family.

The protein localises to the cell membrane. Its pathway is cofactor biosynthesis; adenosylcobalamin biosynthesis. Converts cobyric acid to cobinamide by the addition of aminopropanol on the F carboxylic group. The chain is Probable cobalamin biosynthesis protein CobD from Methanothrix thermoacetophila (strain DSM 6194 / JCM 14653 / NBRC 101360 / PT) (Methanosaeta thermophila).